The sequence spans 685 residues: Glycine--tRNA ligase beta subunit (685 aa).

This sequence belongs to the class-II aminoacyl-tRNA synthetase family. In terms of assembly, tetramer of two alpha and two beta subunits.

It is found in the cytoplasm. It catalyses the reaction tRNA(Gly) + glycine + ATP = glycyl-tRNA(Gly) + AMP + diphosphate. The polypeptide is Glycine--tRNA ligase beta subunit (Leuconostoc mesenteroides subsp. mesenteroides (strain ATCC 8293 / DSM 20343 / BCRC 11652 / CCM 1803 / JCM 6124 / NCDO 523 / NBRC 100496 / NCIMB 8023 / NCTC 12954 / NRRL B-1118 / 37Y)).